A 258-amino-acid polypeptide reads, in one-letter code: MAARVAAVRAAAWLLLGAATGLTRGPAAAFTAARSDAGIRAMCSEIILRQEVLKDGFHRDLLIKVKFGESIEDLHTCRLLIKQDIPAGLYVDPYELASLRERNITEAVMVSENFDIEAPNYLSKESEVLIYARRDSQCIDCFQAFLPVHCRYHRPHSEDGEASIVVNNPDLLMFCDQEFPILKCWAHSEVAAPCALENEDICQWNKMKYKSVYKNVILQVPVGLTVHTSLVCSVTLLITILCSTLILVAVFKYGHFSL.

Residues 1–21 (MAARVAAVRAAAWLLLGAATG) form the signal peptide. Residues 22-230 (LTRGPAAAFT…PVGLTVHTSL (209 aa)) lie on the Lumenal side of the membrane. Asn103 carries an N-linked (GlcNAc...) asparagine glycan. Residues 231–251 (VCSVTLLITILCSTLILVAVF) traverse the membrane as a helical segment. Residues 252–258 (KYGHFSL) lie on the Cytoplasmic side of the membrane.

It belongs to the PIGX family. As to quaternary structure, part of the glycosylphosphatidylinositol-mannosyltransferase I complex that is composed of PIGM and PIGX. Interacts with PIGM; PIGX stabilizes PIGM.

It localises to the endoplasmic reticulum membrane. Its pathway is glycolipid biosynthesis; glycosylphosphatidylinositol-anchor biosynthesis. Its function is as follows. Stabilizing subunit of the glycosylphosphatidylinositol-mannosyltransferase I complex which catalyzes the transfer of the first mannose, via an alpha-1,4 bond from a dolichol-phosphate-mannose (Dol-P-Man) to the glucosaminyl acyl phosphatidylinositol (GlcN-(acyl)PI) intermediate to generate alpha-D-Man-(1-&gt;4)-alpha-D-GlcN-(1-&gt;6)-(1-radyl,2-acyl-sn-glycero-3-phospho)-2-acyl-inositol and participates in the sixth step of the glycosylphosphatidylinositol-anchor biosynthesis. Probably acts by stabilizing the mannosyltransferase PIGM. The protein is GPI alpha-1,4-mannosyltransferase I, stabilizing subunit of Homo sapiens (Human).